We begin with the raw amino-acid sequence, 327 residues long: Biotin synthase (327 aa).

The region spanning 52–279 is the Radical SAM core domain; the sequence is TKVQLSTLVS…ASYVRLSAGR (228 aa). [4Fe-4S] cluster is bound by residues Cys67, Cys71, and Cys74. Cys111, Cys142, Cys202, and Arg274 together coordinate [2Fe-2S] cluster.

Belongs to the radical SAM superfamily. Biotin synthase family. As to quaternary structure, homodimer. Requires [4Fe-4S] cluster as cofactor. The cofactor is [2Fe-2S] cluster.

It catalyses the reaction (4R,5S)-dethiobiotin + (sulfur carrier)-SH + 2 reduced [2Fe-2S]-[ferredoxin] + 2 S-adenosyl-L-methionine = (sulfur carrier)-H + biotin + 2 5'-deoxyadenosine + 2 L-methionine + 2 oxidized [2Fe-2S]-[ferredoxin]. It participates in cofactor biosynthesis; biotin biosynthesis; biotin from 7,8-diaminononanoate: step 2/2. Its function is as follows. Catalyzes the conversion of dethiobiotin (DTB) to biotin by the insertion of a sulfur atom into dethiobiotin via a radical-based mechanism. This is Biotin synthase from Chromobacterium violaceum (strain ATCC 12472 / DSM 30191 / JCM 1249 / CCUG 213 / NBRC 12614 / NCIMB 9131 / NCTC 9757 / MK).